Here is a 297-residue protein sequence, read N- to C-terminus: 4-hydroxy-tetrahydrodipicolinate synthase (297 aa).

Position 46 (T46) interacts with pyruvate. The Proton donor/acceptor role is filled by Y134. The Schiff-base intermediate with substrate role is filled by K163. I205 provides a ligand contact to pyruvate.

Belongs to the DapA family. Homotetramer; dimer of dimers.

The protein resides in the cytoplasm. It catalyses the reaction L-aspartate 4-semialdehyde + pyruvate = (2S,4S)-4-hydroxy-2,3,4,5-tetrahydrodipicolinate + H2O + H(+). The protein operates within amino-acid biosynthesis; L-lysine biosynthesis via DAP pathway; (S)-tetrahydrodipicolinate from L-aspartate: step 3/4. In terms of biological role, catalyzes the condensation of (S)-aspartate-beta-semialdehyde [(S)-ASA] and pyruvate to 4-hydroxy-tetrahydrodipicolinate (HTPA). The protein is 4-hydroxy-tetrahydrodipicolinate synthase of Thermoanaerobacter pseudethanolicus (strain ATCC 33223 / 39E) (Clostridium thermohydrosulfuricum).